The sequence spans 436 residues: tRNA(Ile)-lysidine synthase (436 aa).

Residue 25–30 (SGGLDS) participates in ATP binding.

It belongs to the tRNA(Ile)-lysidine synthase family.

It is found in the cytoplasm. The enzyme catalyses cytidine(34) in tRNA(Ile2) + L-lysine + ATP = lysidine(34) in tRNA(Ile2) + AMP + diphosphate + H(+). Functionally, ligates lysine onto the cytidine present at position 34 of the AUA codon-specific tRNA(Ile) that contains the anticodon CAU, in an ATP-dependent manner. Cytidine is converted to lysidine, thus changing the amino acid specificity of the tRNA from methionine to isoleucine. In Serratia proteamaculans (strain 568), this protein is tRNA(Ile)-lysidine synthase.